Here is a 207-residue protein sequence, read N- to C-terminus: Outer-membrane lipoprotein LolB (207 aa).

Residues 1–26 (MSKLKIDTKRRFSLLIALVLIISLSS) form the signal peptide. Cys-27 is lipidated: N-palmitoyl cysteine. A lipid anchor (S-diacylglycerol cysteine) is attached at Cys-27.

Belongs to the LolB family. Monomer.

The protein resides in the cell outer membrane. Its function is as follows. Plays a critical role in the incorporation of lipoproteins in the outer membrane after they are released by the LolA protein. In Francisella tularensis subsp. tularensis (strain WY96-3418), this protein is Outer-membrane lipoprotein LolB.